We begin with the raw amino-acid sequence, 299 residues long: Probable transport accessory protein MmpS3 (299 aa).

Residues 1 to 72 form a disordered region; sequence MSGPNPPGRE…EHVTGGPYVP (72 aa). The helical transmembrane segment at 101-121 threads the bilayer; it reads VVGVAAIIAAVALVVSVSLLV. Residues 128–139 show a composition bias toward polar residues; sequence KLATGDTTSSAP. Residues 128 to 213 are disordered; the sequence is KLATGDTTSS…TTTTPTGPRQ (86 aa). A compositionally biased stretch (pro residues) spans 150 to 163; that stretch reads PAPPPPPPAPPPTT. The span at 164–176 shows a compositional bias: low complexity; the sequence is EIPTATETQTVTV. A compositionally biased stretch (pro residues) spans 177–193; that stretch reads TPPPPPPPATTTAPPPA.

Belongs to the MmpS family.

It localises to the cell membrane. The chain is Probable transport accessory protein MmpS3 (mmpS3) from Mycobacterium tuberculosis (strain CDC 1551 / Oshkosh).